Reading from the N-terminus, the 515-residue chain is UDP-glucosyltransferase 2 (515 aa).

The first 20 residues, 1–20, serve as a signal peptide directing secretion; the sequence is MEFRLLILALFSVLMSTSNG. Over 21-471 the chain is Lumenal; the sequence is AEILALFPIH…TAGAFLHWYQ (451 aa). 3 N-linked (GlcNAc...) asparagine glycosylation sites follow: Asn51, Asn236, and Asn303. Residues 472–492 form a helical membrane-spanning segment; it reads YLLLDVITFLLVTFCAFCFIV. Residues 493-515 lie on the Cytoplasmic side of the membrane; sequence KYICKALIHHYWSSSKSEKLKKN.

It belongs to the UDP-glycosyltransferase family. Post-translationally, glycosylated.

The protein localises to the endoplasmic reticulum membrane. It carries out the reaction kermesate + UDP-alpha-D-glucose = carminate + UDP + 2 H(+). The enzyme catalyses flavokermesate + UDP-alpha-D-glucose = flavokermesate 7-C-beta-D-glucoside + UDP + 2 H(+). Membrane-bound UDP-glucosyltransferase (UGT) which catalyzes the C-glucosylation of kermesate and flavokermesate to produce carminate and flavokermesate 7-C-beta-D-glucoside (dcll) respectively. Carminate is used as a deterrent against insect predators. The sequence is that of UDP-glucosyltransferase 2 from Dactylopius coccus (Cochineal).